The primary structure comprises 121 residues: Ribosome-binding factor A (121 aa).

It belongs to the RbfA family. In terms of assembly, monomer. Binds 30S ribosomal subunits, but not 50S ribosomal subunits or 70S ribosomes.

The protein resides in the cytoplasm. Its function is as follows. One of several proteins that assist in the late maturation steps of the functional core of the 30S ribosomal subunit. Associates with free 30S ribosomal subunits (but not with 30S subunits that are part of 70S ribosomes or polysomes). Required for efficient processing of 16S rRNA. May interact with the 5'-terminal helix region of 16S rRNA. This chain is Ribosome-binding factor A, found in Hydrogenovibrio crunogenus (strain DSM 25203 / XCL-2) (Thiomicrospira crunogena).